We begin with the raw amino-acid sequence, 34 residues long: Beta/mu-theraphotoxin-Pe1a (34 aa).

Cystine bridges form between cysteine 2–cysteine 16, cysteine 9–cysteine 21, and cysteine 15–cysteine 28.

The protein belongs to the neurotoxin 10 (Hwtx-1) family. 54 (ProTx-1) subfamily. In terms of tissue distribution, expressed by the venom gland.

The protein localises to the secreted. Ion channel impairing toxin that inhibits voltage-gated sodium channels. The recombinantly expressed toxin shows a weak activity against Nav1.7/SCN9A (25% inhibition at 10 uM), and shifts the voltage dependence of channel activation to more depolarized potentials. In Phormingochilus everetti (Malaysian purple earth tiger tarantula), this protein is Beta/mu-theraphotoxin-Pe1a.